The following is a 433-amino-acid chain: Histone deacetylase RPD3 (433 aa).

Positions 19–331 (RRVAYFYDAD…WCFETGLLNN (313 aa)) are histone deacetylase. Residue His-151 is part of the active site. Positions 320–340 (RTWCFETGLLNNVVLDKDLPY) match the ESA1-RPD3 motif motif. The disordered stretch occupies residues 388 to 433 (SVQLNHTPRDAEDLGDVEEDSAEAKDTKGGSQYARDLHVEHDNEFY). Thr-394 carries the phosphothreonine modification. Ser-408 carries the post-translational modification Phosphoserine. A compositionally biased stretch (basic and acidic residues) spans 422 to 433 (RDLHVEHDNEFY).

This sequence belongs to the histone deacetylase family. HD type 1 subfamily. As to quaternary structure, component of the RPD3C(L) complex composed of at least ASH1, CTI6, DEP1, PHO23, RPD3, RXT2, RXT3, SAP30, SDS3, SIN3, UME1 and UME6. Component of the RPD3C(S) complex composed of at least EAF3, RCO1, RPD3, SIN3, and UME1. Interacts with cyclophilins CPR1, CPR6 and CPR7, with the kinase HOG1, and with ESS1, CYC8 and HAC1.

It localises to the cytoplasm. Its subcellular location is the nucleus. It catalyses the reaction N(6)-acetyl-L-lysyl-[histone] + H2O = L-lysyl-[histone] + acetate. Functionally, catalytic component of the RPD3 histone deacetylase (HDAC) complexes RPD3C(L) and RPD3C(S) responsible for the deacetylation of lysine residues on the N-terminal part of the core histones (H2A, H2B, H3 and H4). Histone deacetylation plays an important role in transcriptional regulation, cell cycle progression, DNA damage response, osmotic stress response and developmental events. Is involved in rDNA and telomere silencing and in double strand breaks repair. Required for both full transcription repression and activation of many genes including cell type-specific genes (STE6, TY2 and HO), cell differentiation-specific genes (SPO13), genes that respond to external signals (PHO5) and TRK2. The RPD3 complexes regulate also chromosomal replication timing. This is Histone deacetylase RPD3 (RPD3) from Saccharomyces cerevisiae (strain ATCC 204508 / S288c) (Baker's yeast).